Consider the following 290-residue polypeptide: ATP phosphoribosyltransferase (290 aa).

The protein belongs to the ATP phosphoribosyltransferase family. Long subfamily. It depends on Mg(2+) as a cofactor.

It is found in the cytoplasm. The catalysed reaction is 1-(5-phospho-beta-D-ribosyl)-ATP + diphosphate = 5-phospho-alpha-D-ribose 1-diphosphate + ATP. Its pathway is amino-acid biosynthesis; L-histidine biosynthesis; L-histidine from 5-phospho-alpha-D-ribose 1-diphosphate: step 1/9. Feedback inhibited by histidine. In terms of biological role, catalyzes the condensation of ATP and 5-phosphoribose 1-diphosphate to form N'-(5'-phosphoribosyl)-ATP (PR-ATP). Has a crucial role in the pathway because the rate of histidine biosynthesis seems to be controlled primarily by regulation of HisG enzymatic activity. The protein is ATP phosphoribosyltransferase (hisG) of Saccharolobus solfataricus (strain ATCC 35092 / DSM 1617 / JCM 11322 / P2) (Sulfolobus solfataricus).